Here is a 34-residue protein sequence, read N- to C-terminus: Small, acid-soluble spore protein M (34 aa).

Positions 1-10 (MKTRPKKAGQ) are enriched in basic residues. A disordered region spans residues 1–34 (MKTRPKKAGQQKKTESKAIDSLDKKLGGPNRPST). Residues 12-26 (KKTESKAIDSLDKKL) show a composition bias toward basic and acidic residues.

The protein localises to the spore core. The sequence is that of Small, acid-soluble spore protein M (sspM) from Bacillus subtilis (strain 168).